Reading from the N-terminus, the 94-residue chain is Sucrose operon repressor (94 aa).

In terms of domain architecture, HTH lacI-type spans 1–56; sequence MASLHDVARLAGVSKSTVSRVINDEYGVKEATKQKVRQAVAECGYVPNQVAKDLKE. The H-T-H motif DNA-binding region spans 4 to 23; the sequence is LHDVARLAGVSKSTVSRVIN.

Functionally, repressor for the scr operon. Binds D-fructose as an inducer. The sequence is that of Sucrose operon repressor (scrR) from Vibrio alginolyticus.